The primary structure comprises 105 residues: Small ribosomal subunit protein uS10 (105 aa).

It belongs to the universal ribosomal protein uS10 family. Part of the 30S ribosomal subunit.

Functionally, involved in the binding of tRNA to the ribosomes. This is Small ribosomal subunit protein uS10 from Francisella tularensis subsp. mediasiatica (strain FSC147).